Consider the following 67-residue polypeptide: uncharacterized protein (67 aa).

This is an uncharacterized protein from Swinepox virus (strain Kasza) (SWPV).